A 331-amino-acid polypeptide reads, in one-letter code: Bifunctional nuclease 1 (331 aa).

In terms of domain architecture, BFN spans 126–261; it reads CVQNNPRVLR…RIAYNNGLKV (136 aa). The UVR domain occupies 291 to 326; sequence EAQEFDLVRNMLVAAVEERYKDAAQYRDQLFMFRAK.

This sequence belongs to the bifunctional nuclease family.

It localises to the nucleus. Functionally, bifunctional nuclease with both RNase and DNase activities. Involved in basal defense response. Participates in abscisic acid-derived callose deposition following infection by a necrotrophic pathogen. The chain is Bifunctional nuclease 1 (BBD1) from Oryza sativa subsp. japonica (Rice).